Consider the following 690-residue polypeptide: Methionine--tRNA ligase (690 aa).

The 'HIGH' region motif lies at 20–30 (PYANGSIHLGH). The Zn(2+) site is built by cysteine 151, cysteine 154, cysteine 164, and cysteine 167. Residues 337–341 (KMSKS) carry the 'KMSKS' region motif. An ATP-binding site is contributed by lysine 340. The tRNA-binding domain occupies 589–690 (DFAKVDLRIA…EGAQPGMRVM (102 aa)).

This sequence belongs to the class-I aminoacyl-tRNA synthetase family. MetG type 1 subfamily. In terms of assembly, homodimer. Zn(2+) serves as cofactor.

Its subcellular location is the cytoplasm. The enzyme catalyses tRNA(Met) + L-methionine + ATP = L-methionyl-tRNA(Met) + AMP + diphosphate. Its function is as follows. Is required not only for elongation of protein synthesis but also for the initiation of all mRNA translation through initiator tRNA(fMet) aminoacylation. The sequence is that of Methionine--tRNA ligase from Vibrio vulnificus (strain YJ016).